The sequence spans 246 residues: Breast cancer metastasis-suppressor 1 (246 aa).

Residues 1–57 (MPVQPPSKDTEEMEAEGDSAAEMNGEEEESEEERSGSQTESEEESSEMDDEDYERRR) are disordered. Composition is skewed to acidic residues over residues 11–32 (EEME…ESEE) and 40–52 (ESEE…DDED). Positions 51-98 (EDYERRRSECVSEMLDLEKQFSELKEKLFRERLSQLRLRLEEVGAERA) form a coiled coil. Glycyl lysine isopeptide (Lys-Gly) (interchain with G-Cter in SUMO2) cross-links involve residues K184 and K242.

It belongs to the BRMS1 family. Homohexamer (Potential). Interacts with SNX6, HDAC1 and RELA. Interacts with ARID4A. Identified in mSin3A corepressor complexes together with SIN3A, SIN3B, RBBP4, RBBP7, SAP30, SUDS3, ARID4A, HDAC1 and HDAC2. Interacts with SPOP; this recruits the protein to a ubiquitin ligase complex containing SPOP and CUL3. Post-translationally, ubiquitinated by a cullin-RING-based BCR (BTB-CUL3-RBX1) E3 ubiquitin-protein ligase complex containing SPOP, leading to proteasomal degradation. As to expression, expression levels are higher in term placentas than in early placentas. Low levels of expression observed in normal pregnancies and in molar pregnancies.

The protein resides in the nucleus. It is found in the cytoplasm. Transcriptional repressor. Down-regulates transcription activation by NF-kappa-B by promoting the deacetylation of RELA at 'Lys-310'. Promotes HDAC1 binding to promoter regions. Down-regulates expression of anti-apoptotic genes that are controlled by NF-kappa-B. Promotes apoptosis in cells that have inadequate adherence to a substrate, a process called anoikis, and may thereby inhibit metastasis. May be a mediator of metastasis suppression in breast carcinoma. The sequence is that of Breast cancer metastasis-suppressor 1 (BRMS1) from Homo sapiens (Human).